The chain runs to 707 residues: MDSCHKIDYGLYALEILAQYHNVSVNPEEIKHRFDTDGTGLGLTSWLLAAKSLELKVKQVKKTIDRLNFISLPALVWREDGRHFILTKVSKEANRYLIFDLEQRNPRVLEQSEFEALYQGHIILIASRSSVTGKLAKFDFTWFIPAIIKYRKIFIETLVVSVFLQLFALITPLFFQVVMDKVLVHRGFSTLNVITVALSVVVVFEIILSGLRTYIFAHSTSRIDVELGAKLFRHLLALPISYFESRRVGDTVARVRELDQIRNFLTGQALTSVLDLLFSFIFFAVMWYYSPKLTLVILFSLPCYAAWSVFISPILRRRLDDKFSRNADNQSFLVESVTAINTIKAMAVSPQMTNIWDKQLAGYVAAGFKVTVLATIGQQGIQLIQKTVMIINLWLGAHLVISGDLSIGQLIAFNMLAGQIVAPVIRLAQIWQDFQQVGISVTRLGDVLNSPTESYHGKLALPEINGNITFRNIRFRYKPDSPVILDNINLSIKQGEVIGIVGRSGSGKSTLTKLIQRFYIPENGQVLIDGHDLALADPNWLRRQVGVVLQDNVLLNRSIIDNISLANPGMSVEKVIYAAKLAGAHDFISELREGYNTIVGEQGAGLSGGQRQRIAIARALVNNPKILIFDEATSALDYESEHIIMRNMHKICKGRTVIIIAHRLSTVKNADRIIVMEKGKIVEQGKHKELLSEPESLYSYLYQLQSD.

Residues 3–125 (SCHKIDYGLY…ALYQGHIILI (123 aa)) form the Peptidase C39 domain. The active site involves H83. In terms of domain architecture, ABC transmembrane type-1 spans 154–436 (FIETLVVSVF…LAQIWQDFQQ (283 aa)). 5 helical membrane passes run 158–178 (LVVSVFLQLFALITPLFFQVV), 191–211 (LNVITVALSVVVVFEIILSGL), 269–289 (ALTSVLDLLFSFIFFAVMWYY), 295–315 (LVILFSLPCYAAWSVFISPIL), and 388–408 (VMIINLWLGAHLVISGDLSIG). The ABC transporter domain maps to 468-703 (ITFRNIRFRY…PESLYSYLYQ (236 aa)). 502 to 509 (GRSGSGKS) is a binding site for ATP.

The protein belongs to the ABC transporter superfamily. Protein-1 exporter (TC 3.A.1.109) family. In terms of assembly, homodimer.

It localises to the cell inner membrane. In terms of biological role, part of the ABC transporter complex HlyBD involved in hemolysin export. Transmembrane domains (TMD) form a pore in the inner membrane and the ATP-binding domain (NBD) is responsible for energy generation. This chain is Alpha-hemolysin translocation ATP-binding protein HlyB (hlyB), found in Escherichia coli O6:H1 (strain CFT073 / ATCC 700928 / UPEC).